A 204-amino-acid polypeptide reads, in one-letter code: MGGTFDPIHHGHLVAASEVADLFDLDEVVFVPTGQPWQKHDRRVTAPEDRYLMTVIATASNPRFSVSRVDIDRGGPTYTKDTLRDLHELNPDADLYFITGADALGSILSWQNWEEMFSIARFVGVSRPGYELDGKHISAALRELPADALSLVEVPALAISSSDCRKRAVEARPIWYLVPDGVVQYVTKRRLYLPEPTPELRTPE.

The protein belongs to the NadD family.

It carries out the reaction nicotinate beta-D-ribonucleotide + ATP + H(+) = deamido-NAD(+) + diphosphate. The protein operates within cofactor biosynthesis; NAD(+) biosynthesis; deamido-NAD(+) from nicotinate D-ribonucleotide: step 1/1. Functionally, catalyzes the reversible adenylation of nicotinate mononucleotide (NaMN) to nicotinic acid adenine dinucleotide (NaAD). This is Probable nicotinate-nucleotide adenylyltransferase from Mycobacterium sp. (strain JLS).